Here is a 426-residue protein sequence, read N- to C-terminus: Glutamate-1-semialdehyde 2,1-aminomutase (426 aa).

Lys265 carries the post-translational modification N6-(pyridoxal phosphate)lysine.

This sequence belongs to the class-III pyridoxal-phosphate-dependent aminotransferase family. HemL subfamily. In terms of assembly, homodimer. Pyridoxal 5'-phosphate serves as cofactor.

The protein resides in the cytoplasm. The catalysed reaction is (S)-4-amino-5-oxopentanoate = 5-aminolevulinate. Its pathway is porphyrin-containing compound metabolism; protoporphyrin-IX biosynthesis; 5-aminolevulinate from L-glutamyl-tRNA(Glu): step 2/2. This Shigella boydii serotype 4 (strain Sb227) protein is Glutamate-1-semialdehyde 2,1-aminomutase.